The primary structure comprises 122 residues: Small ribosomal subunit protein uS12 (122 aa).

3-methylthioaspartic acid is present on aspartate 89.

It belongs to the universal ribosomal protein uS12 family. As to quaternary structure, part of the 30S ribosomal subunit. Contacts proteins S8 and S17. May interact with IF1 in the 30S initiation complex.

Its function is as follows. With S4 and S5 plays an important role in translational accuracy. In terms of biological role, interacts with and stabilizes bases of the 16S rRNA that are involved in tRNA selection in the A site and with the mRNA backbone. Located at the interface of the 30S and 50S subunits, it traverses the body of the 30S subunit contacting proteins on the other side and probably holding the rRNA structure together. The combined cluster of proteins S8, S12 and S17 appears to hold together the shoulder and platform of the 30S subunit. In Corynebacterium glutamicum (strain R), this protein is Small ribosomal subunit protein uS12.